The primary structure comprises 589 residues: EZH inhibitory protein (589 aa).

Disordered stretches follow at residues 1–46 (MASS…LRLR), 61–548 (AGED…SGPN), and 561–589 (LDSS…KCRG). 2 stretches are compositionally biased toward gly residues: residues 29 to 38 (GPRGRGGPSG) and 105 to 114 (PKGGGKADQG). Residues 147 to 161 (GAAGPPLPGARGSPA) are compositionally biased toward low complexity. A compositionally biased stretch (polar residues) spans 193-204 (LRSSTSQGSGST). Low complexity-rich tracts occupy residues 299–308 (RSSASAVSPE), 325–334 (RSSASVVSPE), 351–360 (RSSASVVSPE), and 374–390 (PRAT…TTRS). Residue S306 is modified to Phosphoserine. Basic and acidic residues predominate over residues 426-437 (MRLDLQVDREPE). Residues 438–449 (SEAEQEEQELES) are compositionally biased toward acidic residues. Low complexity predominate over residues 450–465 (EPGPSSRPQASRSSSR). A sufficient for interaction with EZH2 region spans residues 482-490 (RRPVRMRAS). The tract at residues 484-503 (PVRMRASSPSPPGRLYPLPK) is necessary and sufficient for inhibition of PRC2/EED-EZH1 and PRC2/EED-EZH2 complex activity. Low complexity predominate over residues 509–547 (VHSPSSSSSESSSVSSSHSPLNKAPDPGSSPPLSSLSGP). Basic and acidic residues predominate over residues 575–589 (AAPHTREEEDKKCRG).

In terms of assembly, interacts with PRC2/EED-EZH1 complex member EZH1 and with PRC2/EED-EZH2 complex member EZH2; the interaction blocks EZH1/EZH2 methyltransferase activity. Interacts (via C-terminus) with SUZ12 which is a member of the PRC2/EED-EZH1 and PRC2/EED-EZH2 complexes. Highly expressed in ovary with lower expression in testis and very low levels in other tissues tested including prostate, brain, kidney, spleen and liver. During spermatogenesis, expressed mainly in spermatogonia with very low expression in spermatocytes I and II.

The protein resides in the nucleus. The protein localises to the cytoplasm. Inhibits PRC2/EED-EZH1 and PRC2/EED-EZH2 complex function by inhibiting EZH1/EZH2 methyltransferase activity, thereby causing down-regulation of histone H3 trimethylation at 'Lys-27' (H3K27me3). Probably inhibits methyltransferase activity by limiting the stimulatory effect of cofactors such as AEBP2 and JARID2. Inhibits H3K27me3 deposition during spermatogenesis and oogenesis. The protein is EZH inhibitory protein of Mus musculus (Mouse).